The primary structure comprises 361 residues: 3-dehydroquinate synthase (361 aa).

NAD(+) contacts are provided by residues Ser72–Lys77, Thr130–Thr131, Lys142, and Lys151. 3 residues coordinate Zn(2+): Glu184, His247, and His264.

This sequence belongs to the sugar phosphate cyclases superfamily. Dehydroquinate synthase family. Requires Co(2+) as cofactor. Zn(2+) serves as cofactor. It depends on NAD(+) as a cofactor.

The protein localises to the cytoplasm. It catalyses the reaction 7-phospho-2-dehydro-3-deoxy-D-arabino-heptonate = 3-dehydroquinate + phosphate. It participates in metabolic intermediate biosynthesis; chorismate biosynthesis; chorismate from D-erythrose 4-phosphate and phosphoenolpyruvate: step 2/7. Catalyzes the conversion of 3-deoxy-D-arabino-heptulosonate 7-phosphate (DAHP) to dehydroquinate (DHQ). This chain is 3-dehydroquinate synthase, found in Bacillus cereus (strain ATCC 10987 / NRS 248).